Here is a 675-residue protein sequence, read N- to C-terminus: Acyl-coenzyme A oxidase 3, peroxisomal (675 aa).

The N-terminal 34 residues, 1-34, are a transit peptide targeting the peroxisome; sequence MSDNRALRRAHVLANHILQSNPPSSNPSLSRELC. 442 to 457 lines the FAD pocket; sequence AVGGQGVKTENLVGQL.

This sequence belongs to the acyl-CoA oxidase family. It depends on FAD as a cofactor. As to expression, most abundant in flowers and senescing rosette leaves. Lower expression in hypocotyls, stems, young rosette leaves, cotyledons, cauline leaves and root tip of young seedlings.

Its subcellular location is the peroxisome. It carries out the reaction a 2,3-saturated acyl-CoA + O2 = a (2E)-enoyl-CoA + H2O2. Its pathway is lipid metabolism; peroxisomal fatty acid beta-oxidation. In terms of biological role, catalyzes the desaturation of medium-chain acyl-CoAs to 2-trans-enoyl-CoAs. Active on C8:0- to C14:0-CoA with a maximal activity on C12:0-CoA. In Arabidopsis thaliana (Mouse-ear cress), this protein is Acyl-coenzyme A oxidase 3, peroxisomal (ACX3).